Consider the following 93-residue polypeptide: Large ribosomal subunit protein uL23 (93 aa).

This sequence belongs to the universal ribosomal protein uL23 family. As to quaternary structure, part of the 50S ribosomal subunit. Contacts protein L29, and trigger factor when it is bound to the ribosome.

One of the early assembly proteins it binds 23S rRNA. One of the proteins that surrounds the polypeptide exit tunnel on the outside of the ribosome. Forms the main docking site for trigger factor binding to the ribosome. The polypeptide is Large ribosomal subunit protein uL23 (Campylobacter jejuni subsp. jejuni serotype O:6 (strain 81116 / NCTC 11828)).